Here is a 392-residue protein sequence, read N- to C-terminus: Large ribosomal subunit protein uL3 (392 aa).

The protein belongs to the universal ribosomal protein uL3 family.

Its subcellular location is the cytoplasm. The L3 protein is a component of the large subunit of cytoplasmic ribosomes. This chain is Large ribosomal subunit protein uL3 (rpl3), found in Aspergillus fumigatus (strain ATCC MYA-4609 / CBS 101355 / FGSC A1100 / Af293) (Neosartorya fumigata).